A 222-amino-acid polypeptide reads, in one-letter code: Dihydrophenazinedicarboxylate synthase (222 aa).

Serine 18 contacts substrate. Residues 73 to 76 (RIVV) and 88 to 89 (ST) each bind FMN. Substrate is bound at residue histidine 90. FMN contacts are provided by residues 94-95 (QK) and glutamine 117. Substrate-binding residues include arginine 139 and serine 147. Residues 152-153 (QS) and arginine 205 contribute to the FMN site.

Belongs to the pyridoxamine 5'-phosphate oxidase family. FMN is required as a cofactor.

It carries out the reaction (1R,6R)-1,4,5,5a,6,9-hexahydrophenazine-1,6-dicarboxylate + O2 = (1R,10aS)-1,4,10,10a-tetrahydrophenazine-1,6-dicarboxylate + H2O2. The catalysed reaction is (1R,10aS)-1,4,10,10a-tetrahydrophenazine-1,6-dicarboxylate + O2 = (5aS)-5,5a-dihydrophenazine-1,6-dicarboxylate + H2O2. The enzyme catalyses (1R,10aS)-1,4,10,10a-tetrahydrophenazine-1-carboxylate + O2 = (10aS)-10,10a-dihydrophenazine-1-carboxylate + H2O2. It catalyses the reaction (1R)-1,4,5,10-tetrahydrophenazine-1-carboxylate + O2 = (10aS)-10,10a-dihydrophenazine-1-carboxylate + H2O2. The protein operates within antibiotic biosynthesis; phenazine biosynthesis. Functionally, involved in the biosynthesis of the antibiotic phenazine, a nitrogen-containing heterocyclic molecule having important roles in virulence, competition and biological control. Catalyzes several oxidations in the terminal steps of core phenazine biosynthesis. It oxidizes both hexahydrophenazine-1,6-dicarboxylic acid (HHPDC) and tetrahydrophenazine-1-carboxylic acid (THPCA) and thereby contributes to the generation of both phenazine-1,6-dicarboxylic acid (PDC) and phenazine-1-carboxylic acid (PCA). The protein is Dihydrophenazinedicarboxylate synthase of Pseudomonas chlororaphis (Pseudomonas aureofaciens).